Reading from the N-terminus, the 93-residue chain is Large ribosomal subunit protein uL23cz/uL23cy (93 aa).

This sequence belongs to the universal ribosomal protein uL23 family. Part of the 50S ribosomal subunit.

It localises to the plastid. It is found in the chloroplast. Functionally, binds to 23S rRNA. In Lactuca sativa (Garden lettuce), this protein is Large ribosomal subunit protein uL23cz/uL23cy (rpl23-A).